The following is a 338-amino-acid chain: NLP effector protein 6 (338 aa).

The N-terminal stretch at 1–19 (MRFTTIFWISLTVLATVRA) is a signal peptide. Residues 68 to 119 (LTLSPSASSPAKRNVTLPPDTTMRPDPRQTEPPTEAPTPASTPAPTPDPGPW) are disordered. Asn-81 is a glycosylation site (N-linked (GlcNAc...) asparagine). The span at 101–117 (TEAPTPASTPAPTPDPG) shows a compositional bias: pro residues. A Conserved undecapeptide motif I motif is present at residues 205–215 (AIMYSWYFPKD). A Hepta-peptide GHRHDWE motif II motif is present at residues 222–227 (GHRHDW).

The protein belongs to the Necrosis inducing protein (NPP1) family.

It localises to the secreted. Functionally, secreted effector that contributes strongly to virulence during infection by P.capsici. Causes large necrotic areas in both host C.annuum and non-host N.benthamiana. The polypeptide is NLP effector protein 6 (Phytophthora capsici).